The chain runs to 235 residues: (5-formylfuran-3-yl)methyl phosphate synthase (235 aa).

The active-site Schiff-base intermediate with substrate is the K27. Residue K85 is the Proton acceptor of the active site.

This sequence belongs to the MfnB family. Homohexamer. Trimer of dimers.

The enzyme catalyses 2 D-glyceraldehyde 3-phosphate = 4-(hydroxymethyl)-2-furancarboxaldehyde phosphate + phosphate + 2 H2O. It functions in the pathway cofactor biosynthesis; methanofuran biosynthesis. Functionally, catalyzes the formation of 4-(hydroxymethyl)-2-furancarboxaldehyde phosphate (4-HFC-P) from two molecules of glyceraldehyde-3-P (GA-3-P). This Methanocaldococcus jannaschii (strain ATCC 43067 / DSM 2661 / JAL-1 / JCM 10045 / NBRC 100440) (Methanococcus jannaschii) protein is (5-formylfuran-3-yl)methyl phosphate synthase.